We begin with the raw amino-acid sequence, 205 residues long: Lymphotoxin-alpha (205 aa).

The N-terminal stretch at 1-34 (MTPPERLFLPRVRGTTLHLLLLGLLLVLLPGAQG) is a signal peptide. O-linked (GalNAc...) threonine glycosylation is present at T41. The THD domain occupies 63–205 (PAAHLIGDPS…STVFFGAFAL (143 aa)). N-linked (GlcNAc...) asparagine glycosylation occurs at N96.

This sequence belongs to the tumor necrosis factor family. Homotrimer, and heterotrimer of either two LTB and one LTA subunits or (less prevalent) two LTA and one LTB subunits. Interacts with TNFRSF14.

The protein resides in the secreted. The protein localises to the membrane. Functionally, cytokine that in its homotrimeric form binds to TNFRSF1A/TNFR1, TNFRSF1B/TNFBR and TNFRSF14/HVEM. In its heterotrimeric form with LTB binds to TNFRSF3/LTBR. Lymphotoxin is produced by lymphocytes and is cytotoxic for a wide range of tumor cells in vitro and in vivo. This chain is Lymphotoxin-alpha (LTA), found in Pan troglodytes (Chimpanzee).